A 449-amino-acid polypeptide reads, in one-letter code: MPAQTIEELIAVIKQRDGHMTEFRQAVEEVVDSLKVIFEREPKYIPIFERMLEPERVIIFRVPWMDDAGRINVNRGFRVQYNSALGPYKGGLRFHPSVNLSILKFLGFEQILKNSLTTLPMGGGKGGSDFDPKGKSDNEVMRFCQSFMTELQRHVGADTDVPAGDIGVGAREIGYLYGQYKRLRNEFTGVLTGKNVKWGGSFIRPEATGYGAVYFLEEMCKDNNTVIRGKNVLLSGSGNVAQFACEKLIQLGAKVLTFSDSNGTIVDKDGFNEEKLAHLMYLKNEKRGRVSEFKDKYPSVAYYEGKKPWECFEGQMDCIMPCATQNEVSGDDATRLVGLGLKFVAEGANMPSTAEAVHVYHAKGVMYGPAKASNAGGVSVSGLEMSQNSVRLQWTAEEVDQKLRGIMRGIFVACRDTAKKYGHPKNYQMGANIAGFLKVADSMIEQGCV.

Lysine 125 is an active-site residue.

This sequence belongs to the Glu/Leu/Phe/Val dehydrogenases family. Homohexamer.

It catalyses the reaction L-glutamate + NADP(+) + H2O = 2-oxoglutarate + NH4(+) + NADPH + H(+). This chain is NADP-specific glutamate dehydrogenase, found in Giardia intestinalis (Giardia lamblia).